The primary structure comprises 536 residues: Indolin-2-one monooxygenase (536 aa).

The chain crosses the membrane as a helical span at residues 18–34; sequence GTATHALLLGVLIFLVI. Position 480 (C480) interacts with heme.

This sequence belongs to the cytochrome P450 family. Requires heme as cofactor.

It localises to the membrane. The enzyme catalyses indolin-2-one + reduced [NADPH--hemoprotein reductase] + O2 = 3-hydroxyindolin-2-one + oxidized [NADPH--hemoprotein reductase] + H2O + H(+). Its pathway is secondary metabolite biosynthesis; 2,4-dihydroxy-1,4-benzoxazin-3-one biosynthesis; 2,4-dihydroxy-1,4-benzoxazin-3-one from indoleglycerol phosphate: step 3/5. In terms of biological role, catalyzes the conversion of indolin-2-one to 3-hydroxyindolin-2-one. In Zea mays (Maize), this protein is Indolin-2-one monooxygenase (CYP71C2).